The following is a 74-amino-acid chain: uncharacterized protein (74 aa).

The segment at 35–59 (CEECDAPIPAARRAAYPSATRCVSC) adopts a dksA C4-type zinc-finger fold.

This is an uncharacterized protein from Enterobacteriaceae (Bacteriophage P2).